The chain runs to 484 residues: Cysteine--tRNA ligase (484 aa).

Residue Cys-29 coordinates Zn(2+). Residues 31-41 carry the 'HIGH' region motif; that stretch reads ITVYDYCHLGH. Zn(2+) contacts are provided by Cys-215, His-240, and Glu-244. Positions 272–276 match the 'KMSKS' region motif; it reads KMSKS. Lys-275 lines the ATP pocket.

It belongs to the class-I aminoacyl-tRNA synthetase family. Monomer. It depends on Zn(2+) as a cofactor.

The protein resides in the cytoplasm. It catalyses the reaction tRNA(Cys) + L-cysteine + ATP = L-cysteinyl-tRNA(Cys) + AMP + diphosphate. This is Cysteine--tRNA ligase from Rippkaea orientalis (strain PCC 8801 / RF-1) (Cyanothece sp. (strain PCC 8801)).